The following is a 188-amino-acid chain: Ribosome-recycling factor (188 aa).

Belongs to the RRF family.

It localises to the cytoplasm. Responsible for the release of ribosomes from messenger RNA at the termination of protein biosynthesis. May increase the efficiency of translation by recycling ribosomes from one round of translation to another. This Akkermansia muciniphila (strain ATCC BAA-835 / DSM 22959 / JCM 33894 / BCRC 81048 / CCUG 64013 / CIP 107961 / Muc) protein is Ribosome-recycling factor.